The sequence spans 497 residues: Validamine 7-phosphate valienyltransferase (497 aa).

Asp158 serves as a coordination point for GDP-valienol. His182 serves as a coordination point for validamine 7-phosphate. GDP-valienol contacts are provided by residues Arg290, Lys295, Arg321, 325 to 326, 361 to 362, and Thr366; these read NR and ND. 383 to 386 contacts validamine 7-phosphate; it reads DGQN. Residues 387-388 and Glu391 each bind GDP-valienol; that span reads LS.

This sequence belongs to the glycosyltransferase 20 family. In terms of assembly, homodimer.

The catalysed reaction is validamine 7-phosphate + GDP-valienol = validoxylamine A 7'-phosphate + GDP + H(+). In terms of biological role, involved in the biosynthesis of the antifungal agent validamycin A. Catalyzes the condensation between GDP-valienol and validamine 7-phosphate via a nonglycosidic C-N bond formation to yield validoxylamine A 7'-phosphate. The protein is Validamine 7-phosphate valienyltransferase of Streptomyces hygroscopicus subsp. limoneus.